The sequence spans 496 residues: MLO-like protein 15 (496 aa).

The Extracellular segment spans residues 1-9 (MAGGGTTLE). A helical membrane pass occupies residues 10-30 (YTPTWVVALVCSVIVSISFAV). The Cytoplasmic portion of the chain corresponds to 31 to 59 (ERLIHRAGKHFKNNDQKQLFGALQKIKEE). The helical transmembrane segment at 60–80 (LMLVGFISLLLSVGQSKIAKI) threads the bilayer. Topologically, residues 81–147 (CISKELSEKF…MSLSALHELH (67 aa)) are extracellular. Residues 148–168 (IFIFVLAVAHIIFCLLTIVFG) traverse the membrane as a helical segment. At 169–269 (TMKIKQWKKW…KYLMRALNSD (101 aa)) the chain is on the cytoplasmic side. Residues 270 to 290 (FKKVVGISWYLWVFVVLFLLL) traverse the membrane as a helical segment. Asparagine 291 is a topological domain (extracellular). The chain crosses the membrane as a helical span at residues 292–312 (IVAWHVYFWLAFIPLILLLAV). Over 313–355 (GTKLEHIITDLAHEVAEKHIAVEGDLVVRPSDDLFWFQSPRLV) the chain is Cytoplasmic. A helical membrane pass occupies residues 356 to 376 (LFLIHFILFQNSFEIAYFFFI). Residues 377-397 (LFQFGWDSCIMDHVKFVIPRL) are Extracellular-facing. A helical transmembrane segment spans residues 398-418 (VIGVIIQLLCSYSTLPLYALV). Topologically, residues 419–496 (TQMGSSFKGA…KEKSEIAHHD (78 aa)) are cytoplasmic. Residues 432 to 453 (EQTQEHLVGWAKMAKRGVKKGA) form a calmodulin-binding region. The tract at residues 454–496 (TQVGTSHDATSPRPSIQLNSLLGKGSSQQNQNPKEKSEIAHHD) is disordered. Positions 455–485 (QVGTSHDATSPRPSIQLNSLLGKGSSQQNQN) are enriched in polar residues. Positions 486-496 (PKEKSEIAHHD) are enriched in basic and acidic residues.

This sequence belongs to the MLO family.

The protein localises to the membrane. Its function is as follows. May be involved in modulation of pathogen defense and leaf cell death. Activity seems to be regulated by Ca(2+)-dependent calmodulin binding and seems not to require heterotrimeric G proteins. This is MLO-like protein 15 (MLO15) from Arabidopsis thaliana (Mouse-ear cress).